A 237-amino-acid polypeptide reads, in one-letter code: Leucyl/phenylalanyl-tRNA--protein transferase (237 aa).

It belongs to the L/F-transferase family.

Its subcellular location is the cytoplasm. It catalyses the reaction N-terminal L-lysyl-[protein] + L-leucyl-tRNA(Leu) = N-terminal L-leucyl-L-lysyl-[protein] + tRNA(Leu) + H(+). It carries out the reaction N-terminal L-arginyl-[protein] + L-leucyl-tRNA(Leu) = N-terminal L-leucyl-L-arginyl-[protein] + tRNA(Leu) + H(+). The catalysed reaction is L-phenylalanyl-tRNA(Phe) + an N-terminal L-alpha-aminoacyl-[protein] = an N-terminal L-phenylalanyl-L-alpha-aminoacyl-[protein] + tRNA(Phe). Functionally, functions in the N-end rule pathway of protein degradation where it conjugates Leu, Phe and, less efficiently, Met from aminoacyl-tRNAs to the N-termini of proteins containing an N-terminal arginine or lysine. The chain is Leucyl/phenylalanyl-tRNA--protein transferase from Shewanella baltica (strain OS155 / ATCC BAA-1091).